Consider the following 101-residue polypeptide: Large ribosomal subunit protein uL23 (101 aa).

The protein belongs to the universal ribosomal protein uL23 family. Part of the 50S ribosomal subunit. Contacts protein L29, and trigger factor when it is bound to the ribosome.

Its function is as follows. One of the early assembly proteins it binds 23S rRNA. One of the proteins that surrounds the polypeptide exit tunnel on the outside of the ribosome. Forms the main docking site for trigger factor binding to the ribosome. In Thiobacillus denitrificans (strain ATCC 25259 / T1), this protein is Large ribosomal subunit protein uL23.